Reading from the N-terminus, the 392-residue chain is Formate-dependent phosphoribosylglycinamide formyltransferase (392 aa).

Residues E22 to L23 and E82 each bind N(1)-(5-phospho-beta-D-ribosyl)glycinamide. Residues R114, K155, S160–Q165, E195–V198, and E203 each bind ATP. In terms of domain architecture, ATP-grasp spans R119 to L308. The Mg(2+) site is built by E267 and E279. Residues D286, K355, and R362 to R363 contribute to the N(1)-(5-phospho-beta-D-ribosyl)glycinamide site.

This sequence belongs to the PurK/PurT family. Homodimer.

The catalysed reaction is N(1)-(5-phospho-beta-D-ribosyl)glycinamide + formate + ATP = N(2)-formyl-N(1)-(5-phospho-beta-D-ribosyl)glycinamide + ADP + phosphate + H(+). It functions in the pathway purine metabolism; IMP biosynthesis via de novo pathway; N(2)-formyl-N(1)-(5-phospho-D-ribosyl)glycinamide from N(1)-(5-phospho-D-ribosyl)glycinamide (formate route): step 1/1. In terms of biological role, involved in the de novo purine biosynthesis. Catalyzes the transfer of formate to 5-phospho-ribosyl-glycinamide (GAR), producing 5-phospho-ribosyl-N-formylglycinamide (FGAR). Formate is provided by PurU via hydrolysis of 10-formyl-tetrahydrofolate. The polypeptide is Formate-dependent phosphoribosylglycinamide formyltransferase (Shigella dysenteriae serotype 1 (strain Sd197)).